The following is a 394-amino-acid chain: NAD(P)H-quinone oxidoreductase subunit H (394 aa).

This sequence belongs to the complex I 49 kDa subunit family. As to quaternary structure, NDH-1 can be composed of about 15 different subunits; different subcomplexes with different compositions have been identified which probably have different functions. Post-translationally, the initiator methionine has been seen to be kept and removed.

It localises to the cellular thylakoid membrane. It carries out the reaction a plastoquinone + NADH + (n+1) H(+)(in) = a plastoquinol + NAD(+) + n H(+)(out). It catalyses the reaction a plastoquinone + NADPH + (n+1) H(+)(in) = a plastoquinol + NADP(+) + n H(+)(out). Its function is as follows. NDH-1 shuttles electrons from an unknown electron donor, via FMN and iron-sulfur (Fe-S) centers, to quinones in the respiratory and/or the photosynthetic chain. The immediate electron acceptor for the enzyme in this species is believed to be plastoquinone. Couples the redox reaction to proton translocation, and thus conserves the redox energy in a proton gradient. Cyanobacterial NDH-1 also plays a role in inorganic carbon-concentration. This is NAD(P)H-quinone oxidoreductase subunit H (ndhH) from Synechocystis sp. (strain ATCC 27184 / PCC 6803 / Kazusa).